Reading from the N-terminus, the 760-residue chain is Striatin-4 (760 aa).

Residues 1–65 (MMEERAAAAV…PTAGPEPLSL (65 aa)) form a disordered region. The span at 7–35 (AAAVASAASSCRPLGSGTAPNPTAAAPAS) shows a compositional bias: low complexity. Positions 43-54 (PVGKGGGGGGSP) are enriched in gly residues. Serine 53 carries the post-translational modification Phosphoserine. The stretch at 69 to 136 (LHFIQHEWAR…QERAKYHKLK (68 aa)) forms a coiled coil. Residues 71–79 (FIQHEWARF) form a caveolin-binding region. Residues 165–182 (ENSPLVWKEGRQLLRQYL) are calmodulin-binding. Residues serine 206, serine 223, and serine 276 each carry the phosphoserine modification. Disordered stretches follow at residues 210 to 233 (NGAGEPVEGAPRASPGPGGLSGGE) and 272 to 346 (EDED…PHEL). 2 stretches are compositionally biased toward acidic residues: residues 272–283 (EDEDSDEDDELD) and 302–317 (EMEDEDEEDDSEDAIN). Residues 332 to 346 (PDPRRCTSEGNPHEL) show a composition bias toward basic and acidic residues. 7 WD repeats span residues 443 to 482 (SHYDGIRSLAFHHSQSALLTASEDGTLKLWNLQKAVTAKK), 496 to 535 (AHRGPVLAVTMGSNSEYCYSGGADARIHSWKIPDLNMDPY), 549 to 588 (GHGDAVWGLAFSPTSQRLASCSADGTVRIWDPSSSGPSCL), 595 to 635 (GEHG…ALLT), 642 to 681 (SGPAQINQVVSHPSQPLTITAHDDRGIRFLDNRTGKSVHS), 684 to 723 (AHLDAVTCLAVDPNGVFLMSGSHDCSLRLWSLDNKTCVQE), and 730 to 759 (KHEEAIHAVACHPSKALIASAGADALAKVF).

The protein belongs to the WD repeat striatin family. As to quaternary structure, part of the core of STRIPAK complexes composed of PP2A catalytic and scaffolding subunits, the striatins (PP2A regulatory subunits), the striatin-associated proteins MOB4, STRIP1 and STRIP2, PDCD10 and members of the STE20 kinases, such as STK24 and STK26. Interacts with CTTNBP2NL. As to expression, mainly expressed in brain but is also expressed at low levels in the kidney.

The protein localises to the cytoplasm. The protein resides in the membrane. It localises to the cell projection. Its subcellular location is the dendritic spine. Functionally, calmodulin-binding scaffolding protein which is the center of the striatin-interacting phosphatase and kinase (STRIPAK) complexes. STRIPAK complexes have critical roles in protein (de)phosphorylation and are regulators of multiple signaling pathways including Hippo, MAPK, nuclear receptor and cytoskeleton remodeling. Different types of STRIPAK complexes are involved in a variety of biological processes such as cell growth, differentiation, apoptosis, metabolism and immune regulation. Key regulator of the expanded Hippo signaling pathway by interacting and allowing the inhibition of MAP4K kinases by the STRIPAK complex. This chain is Striatin-4 (Strn4), found in Mus musculus (Mouse).